The following is a 188-amino-acid chain: Epididymal-specific lipocalin-5 (188 aa).

The signal sequence occupies residues 1 to 19 (MENIMPFALLGLCVGLAAG). The cysteines at positions 82 and 176 are disulfide-linked.

It belongs to the calycin superfamily. Lipocalin family. Post-translationally, there are two similar, immunologically cross-reacting forms of this protein, designated B and C, which probably result from different processing of the amino end. The N-terminus of form C is probably blocked. Synthesized exclusively in the proximal part (caput epididymidis) of the epididymis. It makes up a substantial part of the total protein in the epididymal luminal fluid and binds to the sperm membrane.

Its subcellular location is the secreted. In terms of biological role, associates with spermatozoa in the epididymal fluid but does not bind tightly to them. Binds both all-trans and 9-cis retinoic acid. May act as a retinoid carrier protein which is required for epididymal function and/or sperm maturation. This Rattus norvegicus (Rat) protein is Epididymal-specific lipocalin-5 (Lcn5).